The chain runs to 428 residues: 3-phosphoshikimate 1-carboxyvinyltransferase (428 aa).

Positions 21, 22, and 26 each coordinate 3-phosphoshikimate. Lysine 21 lines the phosphoenolpyruvate pocket. The phosphoenolpyruvate site is built by glycine 91 and arginine 119. Residues serine 164, glutamine 166, aspartate 313, and lysine 340 each coordinate 3-phosphoshikimate. A phosphoenolpyruvate-binding site is contributed by glutamine 166. Aspartate 313 functions as the Proton acceptor in the catalytic mechanism. Phosphoenolpyruvate-binding residues include arginine 344 and arginine 386.

This sequence belongs to the EPSP synthase family. In terms of assembly, monomer.

It localises to the cytoplasm. The catalysed reaction is 3-phosphoshikimate + phosphoenolpyruvate = 5-O-(1-carboxyvinyl)-3-phosphoshikimate + phosphate. The protein operates within metabolic intermediate biosynthesis; chorismate biosynthesis; chorismate from D-erythrose 4-phosphate and phosphoenolpyruvate: step 6/7. Catalyzes the transfer of the enolpyruvyl moiety of phosphoenolpyruvate (PEP) to the 5-hydroxyl of shikimate-3-phosphate (S3P) to produce enolpyruvyl shikimate-3-phosphate and inorganic phosphate. The protein is 3-phosphoshikimate 1-carboxyvinyltransferase of Campylobacter jejuni subsp. doylei (strain ATCC BAA-1458 / RM4099 / 269.97).